Reading from the N-terminus, the 365-residue chain is MVPFLRILGIETSCDETAAAVVERDAEGNARVLSDVVLSQLDEHSAYGGVVPEIAARAHVEALDELIEEALNRANVSLDEVDAIAATSGPGLIGGLLVGLMTGKAIARAAGKPLYAVNHLEGHALTARLTDGLAFPYLMLLVSGGHTQLILVRGVGEYQRWGTTIDDALGEAFDKTAKLLGLPYPGGPAVERMARDGNPDRFAFPRPLVGEARLDFSFSGLKTAVRQAAQDIAPISDQDVADICASFQKAISRTLKDRIGRGLQRFKTEFAATDEKPALVVAGGVAANLELRGTLQALCDKNGFRFIAPPLHLCTDNAVMIAWAGLERMATGAAPDPLDVQPRSRWPLDSNAETLIGFGKRGAKA.

2 residues coordinate Fe cation: His-119 and His-123. Substrate contacts are provided by residues 141-145 (LVSGG), Asp-174, Gly-187, and Asn-288. Residue Asp-316 participates in Fe cation binding.

It belongs to the KAE1 / TsaD family. Requires Fe(2+) as cofactor.

It is found in the cytoplasm. The enzyme catalyses L-threonylcarbamoyladenylate + adenosine(37) in tRNA = N(6)-L-threonylcarbamoyladenosine(37) in tRNA + AMP + H(+). Required for the formation of a threonylcarbamoyl group on adenosine at position 37 (t(6)A37) in tRNAs that read codons beginning with adenine. Is involved in the transfer of the threonylcarbamoyl moiety of threonylcarbamoyl-AMP (TC-AMP) to the N6 group of A37, together with TsaE and TsaB. TsaD likely plays a direct catalytic role in this reaction. The protein is tRNA N6-adenosine threonylcarbamoyltransferase of Rhizobium leguminosarum bv. trifolii (strain WSM2304).